The primary structure comprises 72 residues: MKKWAVIISAVGLAFAVSGCSSDYVMATKDGRMILTDGKPEIDDDTGLVSYHDQQGNAMQINRDDVSQIIER.

An N-terminal signal peptide occupies residues 1–19 (MKKWAVIISAVGLAFAVSG). Cys20 carries N-palmitoyl cysteine lipidation. Cys20 carries the S-diacylglycerol cysteine lipid modification.

To E.coli YgdI.

The protein localises to the cell membrane. This is an uncharacterized protein from Escherichia coli O6:H1 (strain CFT073 / ATCC 700928 / UPEC).